Consider the following 293-residue polypeptide: Glutamyl-Q tRNA(Asp) synthetase (293 aa).

L-glutamate contacts are provided by residues 8 to 12 (RFAPT) and glutamate 44. The 'HIGH' region signature appears at 11 to 21 (PTPSGYLHFGS). Cysteine 100, cysteine 102, tyrosine 114, and cysteine 118 together coordinate Zn(2+). L-glutamate is bound by residues tyrosine 171 and arginine 189. The 'KMSKS' region signature appears at 227–231 (KLGKS). Position 230 (lysine 230) interacts with ATP.

It belongs to the class-I aminoacyl-tRNA synthetase family. GluQ subfamily. Requires Zn(2+) as cofactor.

Its function is as follows. Catalyzes the tRNA-independent activation of glutamate in presence of ATP and the subsequent transfer of glutamate onto a tRNA(Asp). Glutamate is transferred on the 2-amino-5-(4,5-dihydroxy-2-cyclopenten-1-yl) moiety of the queuosine in the wobble position of the QUC anticodon. The protein is Glutamyl-Q tRNA(Asp) synthetase of Pseudomonas aeruginosa (strain ATCC 15692 / DSM 22644 / CIP 104116 / JCM 14847 / LMG 12228 / 1C / PRS 101 / PAO1).